We begin with the raw amino-acid sequence, 349 residues long: Holliday junction branch migration complex subunit RuvB (349 aa).

Residues 1-15 (MSDDYRETDPTRQPE) show a composition bias toward basic and acidic residues. The segment at 1–25 (MSDDYRETDPTRQPEDMGEGSLRPE) is disordered. The segment at 1-183 (MSDDYRETDP…FGIPLRLVFY (183 aa)) is large ATPase domain (RuvB-L). ATP is bound by residues L22, R23, G64, K67, T68, T69, 130 to 132 (EDF), R173, Y183, and R220. Mg(2+) is bound at residue T68. The small ATPAse domain (RuvB-S) stretch occupies residues 184-254 (TPEELRAIVS…LADAALGRLE (71 aa)). The head domain (RuvB-H) stretch occupies residues 257–349 (ERGLDAMDRR…SSLEQDDSAP (93 aa)). Positions 293, 312, and 317 each coordinate DNA.

Belongs to the RuvB family. Homohexamer. Forms an RuvA(8)-RuvB(12)-Holliday junction (HJ) complex. HJ DNA is sandwiched between 2 RuvA tetramers; dsDNA enters through RuvA and exits via RuvB. An RuvB hexamer assembles on each DNA strand where it exits the tetramer. Each RuvB hexamer is contacted by two RuvA subunits (via domain III) on 2 adjacent RuvB subunits; this complex drives branch migration. In the full resolvosome a probable DNA-RuvA(4)-RuvB(12)-RuvC(2) complex forms which resolves the HJ.

The protein resides in the cytoplasm. The catalysed reaction is ATP + H2O = ADP + phosphate + H(+). Its function is as follows. The RuvA-RuvB-RuvC complex processes Holliday junction (HJ) DNA during genetic recombination and DNA repair, while the RuvA-RuvB complex plays an important role in the rescue of blocked DNA replication forks via replication fork reversal (RFR). RuvA specifically binds to HJ cruciform DNA, conferring on it an open structure. The RuvB hexamer acts as an ATP-dependent pump, pulling dsDNA into and through the RuvAB complex. RuvB forms 2 homohexamers on either side of HJ DNA bound by 1 or 2 RuvA tetramers; 4 subunits per hexamer contact DNA at a time. Coordinated motions by a converter formed by DNA-disengaged RuvB subunits stimulates ATP hydrolysis and nucleotide exchange. Immobilization of the converter enables RuvB to convert the ATP-contained energy into a lever motion, pulling 2 nucleotides of DNA out of the RuvA tetramer per ATP hydrolyzed, thus driving DNA branch migration. The RuvB motors rotate together with the DNA substrate, which together with the progressing nucleotide cycle form the mechanistic basis for DNA recombination by continuous HJ branch migration. Branch migration allows RuvC to scan DNA until it finds its consensus sequence, where it cleaves and resolves cruciform DNA. The polypeptide is Holliday junction branch migration complex subunit RuvB (Gluconobacter oxydans (strain 621H) (Gluconobacter suboxydans)).